The chain runs to 549 residues: Beta-mannosyltransferase 3 (549 aa).

At 1 to 37 (MFESDLSFYSALLILCCPISIVFFKKFPIKGYTGANK) the chain is on the cytoplasmic side. Residues 38-58 (VSLFLQCLIAILNLNILYSFI) form a helical membrane-spanning segment. Over 59–549 (NSLTITLGHD…DTMGWDKLSR (491 aa)) the chain is Extracellular.

This sequence belongs to the BMT family.

Its subcellular location is the membrane. Its function is as follows. Beta-mannosyltransferase involved in cell wall biosynthesis. Required for addition of the second beta-mannose residue to acid-stable fraction of cell wall phosphopeptidomannan, and in elongation of beta-mannose chains on the phosphopeptidomannan acid-labile fraction. This chain is Beta-mannosyltransferase 3 (BMT3), found in Candida albicans (strain SC5314 / ATCC MYA-2876) (Yeast).